The chain runs to 597 residues: Proline--tRNA ligase (597 aa).

Belongs to the class-II aminoacyl-tRNA synthetase family. ProS type 1 subfamily. In terms of assembly, homodimer.

It localises to the cytoplasm. The catalysed reaction is tRNA(Pro) + L-proline + ATP = L-prolyl-tRNA(Pro) + AMP + diphosphate. Its function is as follows. Catalyzes the attachment of proline to tRNA(Pro) in a two-step reaction: proline is first activated by ATP to form Pro-AMP and then transferred to the acceptor end of tRNA(Pro). As ProRS can inadvertently accommodate and process non-cognate amino acids such as alanine and cysteine, to avoid such errors it has two additional distinct editing activities against alanine. One activity is designated as 'pretransfer' editing and involves the tRNA(Pro)-independent hydrolysis of activated Ala-AMP. The other activity is designated 'posttransfer' editing and involves deacylation of mischarged Ala-tRNA(Pro). The misacylated Cys-tRNA(Pro) is not edited by ProRS. The sequence is that of Proline--tRNA ligase from Bifidobacterium longum (strain NCC 2705).